A 219-amino-acid polypeptide reads, in one-letter code: Deoxyribose-phosphate aldolase 1 (219 aa).

Aspartate 87 (proton donor/acceptor) is an active-site residue. Lysine 149 functions as the Schiff-base intermediate with acetaldehyde in the catalytic mechanism. Lysine 178 acts as the Proton donor/acceptor in catalysis.

It belongs to the DeoC/FbaB aldolase family. DeoC type 1 subfamily.

It is found in the cytoplasm. The catalysed reaction is 2-deoxy-D-ribose 5-phosphate = D-glyceraldehyde 3-phosphate + acetaldehyde. The protein operates within carbohydrate degradation; 2-deoxy-D-ribose 1-phosphate degradation; D-glyceraldehyde 3-phosphate and acetaldehyde from 2-deoxy-alpha-D-ribose 1-phosphate: step 2/2. Catalyzes a reversible aldol reaction between acetaldehyde and D-glyceraldehyde 3-phosphate to generate 2-deoxy-D-ribose 5-phosphate. The chain is Deoxyribose-phosphate aldolase 1 from Vibrio vulnificus (strain YJ016).